The following is a 1241-amino-acid chain: ATP-dependent helicase/nuclease subunit A (1241 aa).

A UvrD-like helicase ATP-binding domain is found at Ser12–Arg485. Ala33 to Thr40 lines the ATP pocket. The 301-residue stretch at Gly505–Gly805 folds into the UvrD-like helicase C-terminal domain.

Belongs to the helicase family. AddA subfamily. In terms of assembly, heterodimer of AddA and AddB/RexB. Mg(2+) serves as cofactor.

The enzyme catalyses Couples ATP hydrolysis with the unwinding of duplex DNA by translocating in the 3'-5' direction.. It catalyses the reaction ATP + H2O = ADP + phosphate + H(+). Functionally, the heterodimer acts as both an ATP-dependent DNA helicase and an ATP-dependent, dual-direction single-stranded exonuclease. Recognizes the chi site generating a DNA molecule suitable for the initiation of homologous recombination. The AddA nuclease domain is required for chi fragment generation; this subunit has the helicase and 3' -&gt; 5' nuclease activities. This is ATP-dependent helicase/nuclease subunit A from Bacillus cereus (strain AH187).